Here is a 1394-residue protein sequence, read N- to C-terminus: DNA-directed RNA polymerase subunit beta (1394 aa).

The protein belongs to the RNA polymerase beta chain family. The RNAP catalytic core consists of 2 alpha, 1 beta, 1 beta' and 1 omega subunit. When a sigma factor is associated with the core the holoenzyme is formed, which can initiate transcription.

It carries out the reaction RNA(n) + a ribonucleoside 5'-triphosphate = RNA(n+1) + diphosphate. Its function is as follows. DNA-dependent RNA polymerase catalyzes the transcription of DNA into RNA using the four ribonucleoside triphosphates as substrates. The chain is DNA-directed RNA polymerase subunit beta from Anaplasma phagocytophilum (Ehrlichia phagocytophila).